Reading from the N-terminus, the 1343-residue chain is DNA-directed RNA polymerase subunit beta (1343 aa).

It belongs to the RNA polymerase beta chain family. In terms of assembly, the RNAP catalytic core consists of 2 alpha, 1 beta, 1 beta' and 1 omega subunit. When a sigma factor is associated with the core the holoenzyme is formed, which can initiate transcription.

It catalyses the reaction RNA(n) + a ribonucleoside 5'-triphosphate = RNA(n+1) + diphosphate. In terms of biological role, DNA-dependent RNA polymerase catalyzes the transcription of DNA into RNA using the four ribonucleoside triphosphates as substrates. The chain is DNA-directed RNA polymerase subunit beta from Shewanella sediminis (strain HAW-EB3).